The primary structure comprises 335 residues: Agamous-like MADS-box protein AGL104 (335 aa).

In terms of domain architecture, MADS-box spans 1–61; the sequence is MGRVKLEIKR…DRLSLFSGKT (61 aa). Residues 124–151 are a coiled coil; the sequence is SDVEELEHEVCRLQQQLQMAEEELRRYE. The interval 302-335 is disordered; it reads MPAQQSDIPGVTAETQVDHEVSDYETKVPQLSSQ. The segment covering 317-327 has biased composition (basic and acidic residues); the sequence is QVDHEVSDYET.

As to quaternary structure, forms heterodimers with AGL30 and AGL65. As to expression, expressed in pollen.

It is found in the nucleus. Functionally, probable transcription factor that forms heterodimers with the MADS-box proteins AGL30 and AGL65 and is involved in the regulation of pollen maturation at the late stages of pollen development and pollen tube growth. This is Agamous-like MADS-box protein AGL104 from Arabidopsis thaliana (Mouse-ear cress).